Here is a 442-residue protein sequence, read N- to C-terminus: MNPLRTLCVMACLLAVAMGNPQSGNRSGRRSNSLDNVEQPSNWVNPREVEELPNLKEVTLKKLQEMSLEEGATLLDKLYHLSQFNHVFKPDYTPEPSQIRGYIVGERGQKIEFNLNTLVEKVKRQQKFGDDEVTIFIQGLPETNTQVQKATRKLVQAYQQRYNLQPYETTDYSNEEQSQRSSSEEQQTQRRKQNGEQDDTKTGDLIVIQLGNAIEDFEQYATLNIERLGEIIGNRLVELTNTVNVPQEIIHLIGSGPAAHVAGVAGRQFTRQTGHKLRRITALDPTKIYGKPEERLTGLARGDADFVDAIHTSAYGMGTSQRLANVDFFPNGPSTGVPGADNVVEATMRATRYFAESVRPGNERNFPSVAASSYQEYKQNKGYGKRGYMGIATDFDLQGDYILQVNSKSPFGRSTPAQKQTGYHQVHQPWRQSSSNQGSRRQ.

The signal sequence occupies residues 1 to 19 (MNPLRTLCVMACLLAVAMG). Residues 21-33 (PQSGNRSGRRSNS) show a composition bias toward low complexity. Residues 21 to 44 (PQSGNRSGRRSNSLDNVEQPSNWV) are disordered. A phosphoserine mark is found at S31 and S33. Polar residues predominate over residues 34–44 (LDNVEQPSNWV). S82 is modified (phosphoserine). Disordered stretches follow at residues 165–200 (QPYETTDYSNEEQSQRSSSEEQQTQRRKQNGEQDDT) and 408–442 (KSPFGRSTPAQKQTGYHQVHQPWRQSSSNQGSRRQ). The residue at position 170 (T170) is a Phosphothreonine. Y172 bears the Sulfotyrosine mark. Phosphoserine is present on residues S173, S178, S181, S182, and S183. Low complexity-rich tracts occupy residues 175–186 (EEQSQRSSSEEQ) and 431–442 (RQSSSNQGSRRQ).

This sequence belongs to the AB hydrolase superfamily. Lipase family. Post-translationally, tyrosine sulfation occurs in the female only and plays an essential functional role. As to expression, synthesized in the fat body and ovarian follicle cells and accumulate in the oocyte.

It is found in the secreted. Functionally, vitellogenin is the major yolk protein of eggs where it is used as a food source during embryogenesis. Vitellogenins and their receptor yl/yolkless are required for maintenance of microtubule plus-end orientation towards the posterior pole of oocytes. Involved in polarized localization of germ plasm components, such as osk mRNA and vas protein, to the oocyte posterior cortex. Receptor-mediated endocytosis by yl/yolkless is crucial for actin reorganization, mediated by osk isoform A/Long, required to anchor germ plasm components to the oocyte cortex. The chain is Vitellogenin-2 (Yp2) from Drosophila melanogaster (Fruit fly).